We begin with the raw amino-acid sequence, 101 residues long: Small ribosomal subunit protein uS14 (101 aa).

The protein belongs to the universal ribosomal protein uS14 family. As to quaternary structure, part of the 30S ribosomal subunit. Contacts proteins S3 and S10.

Its function is as follows. Binds 16S rRNA, required for the assembly of 30S particles and may also be responsible for determining the conformation of the 16S rRNA at the A site. The polypeptide is Small ribosomal subunit protein uS14 (Stutzerimonas stutzeri (strain A1501) (Pseudomonas stutzeri)).